A 548-amino-acid chain; its full sequence is Chaperonin GroEL (548 aa).

Residues 30 to 33 (TLGP), Lys51, 87 to 91 (DGTTT), Gly415, and Asp495 each bind ATP.

The protein belongs to the chaperonin (HSP60) family. As to quaternary structure, forms a cylinder of 14 subunits composed of two heptameric rings stacked back-to-back. Interacts with the co-chaperonin GroES.

It is found in the cytoplasm. It catalyses the reaction ATP + H2O + a folded polypeptide = ADP + phosphate + an unfolded polypeptide.. Its function is as follows. Together with its co-chaperonin GroES, plays an essential role in assisting protein folding. The GroEL-GroES system forms a nano-cage that allows encapsulation of the non-native substrate proteins and provides a physical environment optimized to promote and accelerate protein folding. The chain is Chaperonin GroEL from Pseudoalteromonas atlantica (strain T6c / ATCC BAA-1087).